Reading from the N-terminus, the 158-residue chain is Serine-protein kinase RsbW (158 aa).

Belongs to the anti-sigma-factor family.

The catalysed reaction is L-seryl-[protein] + ATP = O-phospho-L-seryl-[protein] + ADP + H(+). The enzyme catalyses L-threonyl-[protein] + ATP = O-phospho-L-threonyl-[protein] + ADP + H(+). Its function is as follows. Negative regulator of sigma-B activity. Phosphorylates and inactivates its specific antagonist protein, RsbV. Upon phosphorylation of RsbV, RsbW is released and binds to sigma-B, thereby blocking its ability to form an RNA polymerase holoenzyme (E-sigma-B). The sequence is that of Serine-protein kinase RsbW from Oceanobacillus iheyensis (strain DSM 14371 / CIP 107618 / JCM 11309 / KCTC 3954 / HTE831).